Here is a 196-residue protein sequence, read N- to C-terminus: Nitrogen regulatory protein P-II homolog (196 aa).

The N-terminal 61 residues, 1-61 (MAASMTKPIS…NNSRVLPVVS (61 aa)), are a transit peptide targeting the chloroplast. Residues 108-112 (GFGAQ) and 161-164 (GDGK) contribute to the ATP site. Gly110 serves as a coordination point for Mg(2+).

This sequence belongs to the P(II) protein family. In terms of assembly, homodimer. Interacts with NAGK. Interaction with NAGK is dependent of MgATP and inhibited by 2-oxoglutarate, arginine, glutamate, citrate, and oxaloacetate.

The protein resides in the plastid. The protein localises to the chloroplast. Participates in sensing carbon and organic nitrogen status and regulates some steps of primary carbon and nitrogen metabolism. Required for nitrite uptake in chloroplasts and regulates arginine biosynthesis through interaction with acetylglutamate kinase (NAGK) in chloroplasts. Regulates fatty acids synthesis in chloroplasts by interacting with the acetyl-CoA carboxylase complex and inhibiting acetyl-CoA carboxylase (ACCase) activity. This chain is Nitrogen regulatory protein P-II homolog (GLB1), found in Arabidopsis thaliana (Mouse-ear cress).